A 47-amino-acid polypeptide reads, in one-letter code: Delta-stichotoxin-Hcr1d (47 aa).

3 disulfides stabilise this stretch: cysteine 3-cysteine 43, cysteine 5-cysteine 33, and cysteine 26-cysteine 44.

It belongs to the sea anemone sodium channel inhibitory toxin family. Type II subfamily.

The protein resides in the secreted. It localises to the nematocyst. In terms of biological role, binds to site 3 of voltage-gated sodium channels and inhibits the inactivation process. The sequence is that of Delta-stichotoxin-Hcr1d from Radianthus crispa (Leathery sea anemone).